Here is a 492-residue protein sequence, read N- to C-terminus: 3-octaprenyl-4-hydroxybenzoate carboxy-lyase (492 aa).

Residue Asn-172 participates in Mn(2+) binding. Prenylated FMN-binding positions include Ile-175–Arg-177, Arg-189–Leu-191, and Arg-194–Gly-195. Glu-238 lines the Mn(2+) pocket. Residue Asp-287 is the Proton donor of the active site.

The protein belongs to the UbiD family. Homohexamer. Prenylated FMN is required as a cofactor. Mn(2+) serves as cofactor.

It is found in the cell membrane. It carries out the reaction a 4-hydroxy-3-(all-trans-polyprenyl)benzoate + H(+) = a 2-(all-trans-polyprenyl)phenol + CO2. It functions in the pathway cofactor biosynthesis; ubiquinone biosynthesis. Its function is as follows. Catalyzes the decarboxylation of 3-octaprenyl-4-hydroxy benzoate to 2-octaprenylphenol, an intermediate step in ubiquinone biosynthesis. The sequence is that of 3-octaprenyl-4-hydroxybenzoate carboxy-lyase from Pasteurella multocida (strain Pm70).